A 410-amino-acid polypeptide reads, in one-letter code: Argininosuccinate synthase (410 aa).

Residue 6–14 (AYSGGLDTS) coordinates ATP. Tyrosine 84 lines the L-citrulline pocket. Glycine 114 contributes to the ATP binding site. L-aspartate-binding residues include threonine 116, asparagine 120, and aspartate 121. Asparagine 120 serves as a coordination point for L-citrulline. L-citrulline-binding residues include arginine 124, serine 169, serine 178, glutamate 254, and tyrosine 266.

Belongs to the argininosuccinate synthase family. Type 1 subfamily. In terms of assembly, homotetramer.

It is found in the cytoplasm. The catalysed reaction is L-citrulline + L-aspartate + ATP = 2-(N(omega)-L-arginino)succinate + AMP + diphosphate + H(+). The protein operates within amino-acid biosynthesis; L-arginine biosynthesis; L-arginine from L-ornithine and carbamoyl phosphate: step 2/3. This chain is Argininosuccinate synthase, found in Pyrococcus furiosus (strain ATCC 43587 / DSM 3638 / JCM 8422 / Vc1).